The primary structure comprises 82 residues: Small ribosomal subunit protein bS16 (82 aa).

This sequence belongs to the bacterial ribosomal protein bS16 family.

The chain is Small ribosomal subunit protein bS16 from Mannheimia succiniciproducens (strain KCTC 0769BP / MBEL55E).